Here is a 251-residue protein sequence, read N- to C-terminus: Carbohydrate deacetylase (251 aa).

His59 and His122 together coordinate Mg(2+).

The protein belongs to the YdjC deacetylase family. As to quaternary structure, homodimer. The cofactor is Mg(2+).

Its function is as follows. Probably catalyzes the deacetylation of acetylated carbohydrates an important step in the degradation of oligosaccharides. The sequence is that of Carbohydrate deacetylase from Vibrio campbellii (strain ATCC BAA-1116).